We begin with the raw amino-acid sequence, 325 residues long: MASSSCFLRSILFSSPTNLRSNHHLPTFFPKNYLICSHSTSSRFESLSVSSIGTGSTKKSSDTRRKVKSMATTNIGKEEKKRVEIYDLEENLVIDLAKFTADLSDKFCKERGAFTVVVSGGSLIKSLRKLVESPYVDSIDWARWHFFWVDERVVPKNHDDSNYKLAYDSFLSKVPIPPGNVYAINEALSAEAAADDYETCLKHLVNTNILRVSESTGFPKFDLMLLGMGPDGHVASLFPGHGLCNESKKWVVSISDSPKPPSERITFTFPVINSSAHVALVVCGSGKAEAVEAALKKTGNVPPAGSVSAEDELVWFLDKPASSKL.

Residues 1-68 constitute a chloroplast transit peptide; that stretch reads MASSSCFLRS…KSSDTRRKVK (68 aa). Residues 51–73 form a disordered region; the sequence is SIGTGSTKKSSDTRRKVKSMATT. Positions 323 to 325 match the Microbody targeting signal motif; that stretch reads SKL.

This sequence belongs to the glucosamine/galactosamine-6-phosphate isomerase family. 6-phosphogluconolactonase subfamily. In terms of assembly, interacts with TRXM2. As to expression, expressed in roots, leaves and shoots.

Its subcellular location is the plastid. The protein resides in the chloroplast. It localises to the peroxisome. The catalysed reaction is 6-phospho-D-glucono-1,5-lactone + H2O = 6-phospho-D-gluconate + H(+). It functions in the pathway carbohydrate degradation; pentose phosphate pathway; D-ribulose 5-phosphate from D-glucose 6-phosphate (oxidative stage): step 2/3. Catalyzes the hydrolysis of 6-phosphogluconolactone to 6-phosphogluconate. Involved in the regulation of cellular redox state; enzymatic activity is required for this function. Required for sugar-dependent expression of nitrate assimilation genes in the nucleus of root cells. This chain is 6-phosphogluconolactonase 3, chloroplastic, found in Arabidopsis thaliana (Mouse-ear cress).